The primary structure comprises 312 residues: Zinc import ATP-binding protein ZnuC (312 aa).

The ABC transporter domain occupies 13 to 228 (VSLEDVGVLR…PEYVRLFGSR (216 aa)). 45-52 (GPNGSGKS) serves as a coordination point for ATP. Positions 241–312 (DHTHLPDGRV…HSRSGEGRHA (72 aa)) are disordered. Residues 243–312 (THLPDGRVLH…HSRSGEGRHA (70 aa)) are compositionally biased toward basic and acidic residues.

The protein belongs to the ABC transporter superfamily. Zinc importer (TC 3.A.1.15.5) family. As to quaternary structure, the complex is composed of two ATP-binding proteins (ZnuC), two transmembrane proteins (ZnuB) and a solute-binding protein (ZnuA).

It is found in the cell inner membrane. It catalyses the reaction Zn(2+)(out) + ATP(in) + H2O(in) = Zn(2+)(in) + ADP(in) + phosphate(in) + H(+)(in). In terms of biological role, part of the ABC transporter complex ZnuABC involved in zinc import. Responsible for energy coupling to the transport system. In Rhizobium etli (strain ATCC 51251 / DSM 11541 / JCM 21823 / NBRC 15573 / CFN 42), this protein is Zinc import ATP-binding protein ZnuC.